An 80-amino-acid polypeptide reads, in one-letter code: Large ribosomal subunit protein uL29 (80 aa).

Belongs to the universal ribosomal protein uL29 family.

This is Large ribosomal subunit protein uL29 from Saccharopolyspora erythraea (strain ATCC 11635 / DSM 40517 / JCM 4748 / NBRC 13426 / NCIMB 8594 / NRRL 2338).